We begin with the raw amino-acid sequence, 308 residues long: Ribosomal protein L11 methyltransferase (308 aa).

Positions 157, 178, 200, and 243 each coordinate S-adenosyl-L-methionine.

It belongs to the methyltransferase superfamily. PrmA family.

It is found in the cytoplasm. The catalysed reaction is L-lysyl-[protein] + 3 S-adenosyl-L-methionine = N(6),N(6),N(6)-trimethyl-L-lysyl-[protein] + 3 S-adenosyl-L-homocysteine + 3 H(+). In terms of biological role, methylates ribosomal protein L11. The protein is Ribosomal protein L11 methyltransferase of Pelotomaculum thermopropionicum (strain DSM 13744 / JCM 10971 / SI).